A 496-amino-acid chain; its full sequence is Lysine--tRNA ligase (496 aa).

Positions 409 and 416 each coordinate Mg(2+).

The protein belongs to the class-II aminoacyl-tRNA synthetase family. In terms of assembly, homodimer. Mg(2+) is required as a cofactor.

The protein localises to the cytoplasm. The enzyme catalyses tRNA(Lys) + L-lysine + ATP = L-lysyl-tRNA(Lys) + AMP + diphosphate. The protein is Lysine--tRNA ligase of Streptococcus suis (strain 05ZYH33).